We begin with the raw amino-acid sequence, 395 residues long: Oxalate oxidoreductase subunit alpha (395 aa).

In terms of assembly, dimer of heterotrimer of one alpha, one beta and one delta subunit.

The catalysed reaction is oxidized 2[4Fe-4S]-[ferredoxin] + oxalate = reduced 2[4Fe-4S]-[ferredoxin] + 2 CO2. Its function is as follows. Catalyzes the anaerobic oxidation of oxalate using a broad range of electron acceptors, including ferredoxin and the nickel-dependent carbon monoxide dehydrogenase. Does not require coenzyme A as cosubstrate. Enables anaerobic growth on oxalate which is used as energy source by the bacteria. This is Oxalate oxidoreductase subunit alpha from Moorella thermoacetica (strain ATCC 39073 / JCM 9320).